Reading from the N-terminus, the 275-residue chain is Formamidopyrimidine-DNA glycosylase (275 aa).

Pro2 serves as the catalytic Schiff-base intermediate with DNA. Glu3 acts as the Proton donor in catalysis. Residue Lys58 is the Proton donor; for beta-elimination activity of the active site. His92, Arg111, and Arg154 together coordinate DNA. An FPG-type zinc finger spans residues 239–273 (HVYHRQGLPCQRCGTPIERIKVAQRGTHFCPHCQV). Catalysis depends on Arg263, which acts as the Proton donor; for delta-elimination activity.

It belongs to the FPG family. Monomer. It depends on Zn(2+) as a cofactor.

The enzyme catalyses Hydrolysis of DNA containing ring-opened 7-methylguanine residues, releasing 2,6-diamino-4-hydroxy-5-(N-methyl)formamidopyrimidine.. It catalyses the reaction 2'-deoxyribonucleotide-(2'-deoxyribose 5'-phosphate)-2'-deoxyribonucleotide-DNA = a 3'-end 2'-deoxyribonucleotide-(2,3-dehydro-2,3-deoxyribose 5'-phosphate)-DNA + a 5'-end 5'-phospho-2'-deoxyribonucleoside-DNA + H(+). Involved in base excision repair of DNA damaged by oxidation or by mutagenic agents. Acts as a DNA glycosylase that recognizes and removes damaged bases. Has a preference for oxidized purines, such as 7,8-dihydro-8-oxoguanine (8-oxoG). Has AP (apurinic/apyrimidinic) lyase activity and introduces nicks in the DNA strand. Cleaves the DNA backbone by beta-delta elimination to generate a single-strand break at the site of the removed base with both 3'- and 5'-phosphates. The protein is Formamidopyrimidine-DNA glycosylase of Pediococcus pentosaceus (strain ATCC 25745 / CCUG 21536 / LMG 10740 / 183-1w).